The sequence spans 212 residues: Ribonuclease HII (212 aa).

The 206-residue stretch at 1-206 (MARFGVDEAG…SRDALGAAEQ (206 aa)) folds into the RNase H type-2 domain. A divalent metal cation contacts are provided by aspartate 7, glutamate 8, and aspartate 100.

The protein belongs to the RNase HII family. Mn(2+) serves as cofactor. Mg(2+) is required as a cofactor.

The protein resides in the cytoplasm. The enzyme catalyses Endonucleolytic cleavage to 5'-phosphomonoester.. Endonuclease that specifically degrades the RNA of RNA-DNA hybrids. The chain is Ribonuclease HII from Halobacterium salinarum (strain ATCC 29341 / DSM 671 / R1).